Reading from the N-terminus, the 325-residue chain is GMP reductase (325 aa).

C174 functions as the Thioimidate intermediate in the catalytic mechanism. NADP(+) is bound at residue 203–226 (LIADGGIRTHGDIAKSIRFGASMV).

This sequence belongs to the IMPDH/GMPR family. GuaC type 2 subfamily.

It carries out the reaction IMP + NH4(+) + NADP(+) = GMP + NADPH + 2 H(+). Catalyzes the irreversible NADPH-dependent deamination of GMP to IMP. It functions in the conversion of nucleobase, nucleoside and nucleotide derivatives of G to A nucleotides, and in maintaining the intracellular balance of A and G nucleotides. This is GMP reductase from Staphylococcus aureus (strain bovine RF122 / ET3-1).